A 274-amino-acid polypeptide reads, in one-letter code: HTH-type transcriptional regulator GadX (274 aa).

Residues 145–242 (TRVCTVINNN…GMTPTEYQER (98 aa)) form the HTH araC/xylS-type domain. DNA-binding regions (H-T-H motif) lie at residues 162–183 (ARIASELLMSPSLLKKKLREEG) and 209–232 (IKRVAVSCGYHSVSYFIYVFRNYY).

In terms of assembly, homodimer.

Positively regulates the expression of about fifteen genes involved in acid resistance such as gadA, gadB and gadC. Depending on the conditions (growth phase and medium), can repress gadW. The polypeptide is HTH-type transcriptional regulator GadX (gadX) (Escherichia coli O6:H1 (strain CFT073 / ATCC 700928 / UPEC)).